A 227-amino-acid chain; its full sequence is MAYPFQLGLQDATSPIMEELLHFHDHALMIVFLISSLVLYIISLMLTTKLTHTSTMDAQEVETVWTILPAIILILIALPSLRILYMMDEINNPSLTVKTMGHQWYWSYEYTDYEDLNFDSYMIPTQELKPGELRLLEVDNRVVLPMEMTIRMLISSEDVLHSWAVPSLGLKTDAIPGRLNQTTLMAMRPGLYYGQCSEICGSNHSFMPIVLEMVPLSYFETWSALMV.

The Mitochondrial intermembrane segment spans residues 1–14 (MAYPFQLGLQDATS). A helical transmembrane segment spans residues 15-45 (PIMEELLHFHDHALMIVFLISSLVLYIISLM). The Mitochondrial matrix segment spans residues 46 to 59 (LTTKLTHTSTMDAQ). The helical transmembrane segment at 60–87 (EVETVWTILPAIILILIALPSLRILYMM) threads the bilayer. Residues 88-227 (DEINNPSLTV…YFETWSALMV (140 aa)) lie on the Mitochondrial intermembrane side of the membrane. Cu cation contacts are provided by histidine 161, cysteine 196, glutamate 198, cysteine 200, histidine 204, and methionine 207. Glutamate 198 lines the Mg(2+) pocket. Tyrosine 218 is subject to Phosphotyrosine.

Belongs to the cytochrome c oxidase subunit 2 family. In terms of assembly, component of the cytochrome c oxidase (complex IV, CIV), a multisubunit enzyme composed of 14 subunits. The complex is composed of a catalytic core of 3 subunits MT-CO1, MT-CO2 and MT-CO3, encoded in the mitochondrial DNA, and 11 supernumerary subunits COX4I, COX5A, COX5B, COX6A, COX6B, COX6C, COX7A, COX7B, COX7C, COX8 and NDUFA4, which are encoded in the nuclear genome. The complex exists as a monomer or a dimer and forms supercomplexes (SCs) in the inner mitochondrial membrane with NADH-ubiquinone oxidoreductase (complex I, CI) and ubiquinol-cytochrome c oxidoreductase (cytochrome b-c1 complex, complex III, CIII), resulting in different assemblies (supercomplex SCI(1)III(2)IV(1) and megacomplex MCI(2)III(2)IV(2)). Found in a complex with TMEM177, COA6, COX18, COX20, SCO1 and SCO2. Interacts with TMEM177 in a COX20-dependent manner. Interacts with COX20. Interacts with COX16. It depends on Cu cation as a cofactor.

Its subcellular location is the mitochondrion inner membrane. It carries out the reaction 4 Fe(II)-[cytochrome c] + O2 + 8 H(+)(in) = 4 Fe(III)-[cytochrome c] + 2 H2O + 4 H(+)(out). Its function is as follows. Component of the cytochrome c oxidase, the last enzyme in the mitochondrial electron transport chain which drives oxidative phosphorylation. The respiratory chain contains 3 multisubunit complexes succinate dehydrogenase (complex II, CII), ubiquinol-cytochrome c oxidoreductase (cytochrome b-c1 complex, complex III, CIII) and cytochrome c oxidase (complex IV, CIV), that cooperate to transfer electrons derived from NADH and succinate to molecular oxygen, creating an electrochemical gradient over the inner membrane that drives transmembrane transport and the ATP synthase. Cytochrome c oxidase is the component of the respiratory chain that catalyzes the reduction of oxygen to water. Electrons originating from reduced cytochrome c in the intermembrane space (IMS) are transferred via the dinuclear copper A center (CU(A)) of subunit 2 and heme A of subunit 1 to the active site in subunit 1, a binuclear center (BNC) formed by heme A3 and copper B (CU(B)). The BNC reduces molecular oxygen to 2 water molecules using 4 electrons from cytochrome c in the IMS and 4 protons from the mitochondrial matrix. In Canis aureus (Golden jackal), this protein is Cytochrome c oxidase subunit 2 (MT-CO2).